Consider the following 588-residue polypeptide: Disabled homolog 1 (588 aa).

Residues 1-26 (MSTETELQVAVKTSAKKDSRKKGQDR) form a disordered region. The span at 15–26 (AKKDSRKKGQDR) shows a compositional bias: basic and acidic residues. Residues 36–189 (KGEGVRYKAK…CEQAVYQTIL (154 aa)) enclose the PID domain. Phosphotyrosine is present on residues tyrosine 198, tyrosine 220, and tyrosine 232. Disordered stretches follow at residues 224 to 243 (TSQKKEGVYDVPKSQPNSQP), 420 to 444 (LATVPGTNDSARSSPQSDKPRQKMG), 451 to 470 (FQMVQPPPVPSRKPDQPSLT), and 502 to 588 (LTPV…QDGS). The span at 424–436 (PGTNDSARSSPQS) shows a compositional bias: polar residues. Composition is skewed to low complexity over residues 503 to 512 (TPVTSTTPST) and 523 to 534 (SSPSKSSASHVS). Serine 524 bears the Phosphoserine; by CDK5 mark. Over residues 537 to 546 (TADDIFEEGF) the composition is skewed to acidic residues.

In terms of assembly, associates with the SH2 domains of SRC, FYN and ABL. Interacts (phosphorylated on tyrosine residues) with CRK and CRKL (via respective SH2 domain). Interacts with SIAH1, LRP8 and VLDLR. Interacts with LRP1. Interacts with APLP1 (via NPXY motif). Interacts with DAB2IP. Interacts with ZSWIM8. Phosphorylated by FYN on Tyr-198 and Tyr-220 upon reelin induction in embryonic neurons. Also found phosphorylated on Tyr-232 upon reelin induction. Also phosphorylated on Ser-524 independently of reelin signaling. Post-translationally, ubiquitinated by various cullin-5-RING E3 ubiquitin-protein ligase complexes (ECS complexes) following ligand-binding and phosphorylation, leading to its degradation. Ubiquitinated by the ECS(SOCS7) complex in the cortical plate of the developing cerebral cortex following ligand-binding and phosphorylation by FYN, leading to its degradation by the proteasome. Recognized by ZSWIM8 through a disorder targets misorder mechanism that eliminates misfolded DAB1 via ubiquitination and proteasomal degradation. In terms of tissue distribution, expressed mainly in brain. Specifically expressin in cortical neurons.

It localises to the cytoplasm. In terms of biological role, signaling adapter of the reelin-mediated signaling pathway, which regulates the migration and differentiation of postmitotic neurons during brain development. Mediates intracellular transduction of Reelin signaling following reelin (RELN)-binding to its receptor: acts by docking proteins through its phosphotyrosine residues and PID domain. The sequence is that of Disabled homolog 1 from Mus musculus (Mouse).